Here is a 188-residue protein sequence, read N- to C-terminus: Acireductone dioxygenase (188 aa).

Fe(2+)-binding residues include histidine 97, histidine 99, glutamate 103, and histidine 141. Histidine 97, histidine 99, glutamate 103, and histidine 141 together coordinate Ni(2+).

It belongs to the acireductone dioxygenase (ARD) family. Monomer. Fe(2+) serves as cofactor. It depends on Ni(2+) as a cofactor.

The catalysed reaction is 1,2-dihydroxy-5-(methylsulfanyl)pent-1-en-3-one + O2 = 3-(methylsulfanyl)propanoate + CO + formate + 2 H(+). It catalyses the reaction 1,2-dihydroxy-5-(methylsulfanyl)pent-1-en-3-one + O2 = 4-methylsulfanyl-2-oxobutanoate + formate + 2 H(+). It functions in the pathway amino-acid biosynthesis; L-methionine biosynthesis via salvage pathway; L-methionine from S-methyl-5-thio-alpha-D-ribose 1-phosphate: step 5/6. Its function is as follows. Catalyzes 2 different reactions between oxygen and the acireductone 1,2-dihydroxy-3-keto-5-methylthiopentene (DHK-MTPene) depending upon the metal bound in the active site. Fe-containing acireductone dioxygenase (Fe-ARD) produces formate and 2-keto-4-methylthiobutyrate (KMTB), the alpha-ketoacid precursor of methionine in the methionine recycle pathway. Ni-containing acireductone dioxygenase (Ni-ARD) produces methylthiopropionate, carbon monoxide and formate, and does not lie on the methionine recycle pathway. This chain is Acireductone dioxygenase, found in Xanthomonas oryzae pv. oryzae (strain MAFF 311018).